A 206-amino-acid chain; its full sequence is MTTFETPRETVFIESVDSIPQSKKTHVFAICVTVDNKPIVAARRSSFVFQEITMNMNPPIVVTISKHLTNYMYNNEIKEIKRKLQKGSAPIYKTSFEELILLGGKLNKSETIDDCIRREIKEETDSKLTIKSIGTTCVKITITDKLFNRKYVNYCKLCYIDELMEEVISFVIYNVEIRKLKSLLDCDNNDKFNYLRFIYNTLLYSK.

The Nudix hydrolase domain occupies Lys-23 to Lys-206. The Nudix box signature appears at Gly-104–Asp-125. Position 110 (Glu-110) interacts with Mg(2+). The Nucleophile role is filled by Glu-119. Residues Glu-123 and Asp-144 each coordinate Mg(2+).

This sequence belongs to the Nudix hydrolase family. It depends on Mg(2+) as a cofactor. Mn(2+) is required as a cofactor.

Its function is as follows. Decapping enzyme required for the removal of the 5'-end m7GpppN cap tethered to viral and host mRNAs to allow their decay in cells. May therefore accelerate viral and cellular mRNA turnover to eliminate competing host mRNAs and allow stage-specific synthesis of viral proteins. Acceleration of the turnover of cellular transcripts may even promote the shutoff of host protein synthesis. Does not cleave unmethylated RNAs or RNAs shorter than 24 nucleotides. The protein is mRNA-decapping protein D9 of Oryctolagus cuniculus (Rabbit).